The chain runs to 576 residues: Vesicular glutamate transporter 1 (576 aa).

Over 1–63 (MEFRKEEFKK…CTCFGLPRRY (63 aa)) the chain is Cytoplasmic. The chain crosses the membrane as a helical span at residues 64–84 (IIAIMSGLGFCISFGIRCNLG). The Vesicular portion of the chain corresponds to 85–116 (VAIVSMVNNNTVYKGNKLVIEQAQFNWDPETV). N-linked (GlcNAc...) asparagine glycosylation is present at Asn93. The helical transmembrane segment at 117 to 137 (GMIHGSFFWGYIVTQIPGGYI) threads the bilayer. Residues 138–140 (CQK) lie on the Cytoplasmic side of the membrane. The chain crosses the membrane as a helical span at residues 141–161 (FAANRVFGFAIVATSTLNMLI). The Vesicular segment spans residues 162–168 (PSAARVH). The chain crosses the membrane as a helical span at residues 169–189 (FACVICVRILQGLVEGVTYPA). The Cytoplasmic portion of the chain corresponds to 190 to 208 (CHGIWSKWAPPLERSRLAT). A helical membrane pass occupies residues 209–229 (TAFCGSYAGAVVAMPLAGVLV). The Vesicular portion of the chain corresponds to 230–236 (QYSGWSS). A helical transmembrane segment spans residues 237-257 (VFYVYGSFGITWYMFWILVSY). The Cytoplasmic segment spans residues 258 to 297 (ESPAQHPTISEEERKYIEESIGESTGFMNPMAKFKAPWRK). Residues 298-320 (FFTSMPVYAIIVANFCRSWTFYL) form a helical membrane-spanning segment. Topologically, residues 321–341 (LLISQPAYFEEVFGFAISKVG) are vesicular. The helical transmembrane segment at 342-362 (LLSALPHLVMTIIVPIGGQIA) threads the bilayer. Residues 363 to 378 (DFLRTKRIMSTTNVRK) are Cytoplasmic-facing. A helical membrane pass occupies residues 379–399 (MMNCGGFGMEATLLLVVGYSH). Topologically, residues 400 to 401 (SR) are vesicular. A helical transmembrane segment spans residues 402–422 (GVAISFLVLAVGFSGFAISGF). Topologically, residues 423–435 (NVNHLDIAPRYAS) are cytoplasmic. The helical transmembrane segment at 436 to 456 (ILMGISNGVGTLSGMVCPLIV) threads the bilayer. Topologically, residues 457–469 (GAMTKHKTREEWQ) are vesicular. A helical membrane pass occupies residues 470 to 490 (YVFLIASLVHYGGVVFYGIFA). The Cytoplasmic segment spans residues 491 to 576 (SGEKQPWAEP…YGTVAERDLS (86 aa)). Residues 517–552 (ADESEEQTQAHGGYGSYGATQTTSQQNGGWATDWEK) form a disordered region. A compositionally biased stretch (polar residues) spans 534-545 (GATQTTSQQNGG).

The protein belongs to the major facilitator superfamily. Sodium/anion cotransporter family. VGLUT subfamily.

The protein localises to the cytoplasmic vesicle. Its subcellular location is the secretory vesicle. It localises to the synaptic vesicle membrane. The protein resides in the cell membrane. It is found in the synapse. The protein localises to the synaptosome. The catalysed reaction is L-glutamate(out) = L-glutamate(in). The enzyme catalyses chloride(in) = chloride(out). It catalyses the reaction 3 Na(+)(out) + phosphate(out) = 3 Na(+)(in) + phosphate(in). It carries out the reaction phosphate(in) = phosphate(out). The catalysed reaction is K(+)(in) + H(+)(out) = K(+)(out) + H(+)(in). Its activity is regulated as follows. Chloride channel activity is allosterically activated by lumenal H(+) and Cl(-) leading to synaptic vesicles acidification. The L-glutamate transport activity is allosterically activated by lumenal H(+) and Cl(-). The allosteric activation by H(+) efficiently prevents non-vesicular efflux across the plasma membrane, thereby restricting L-glutamate transport activity to acidic membranes such as synaptic vesicles. Multifunctional transporter that transports L-glutamate as well as multiple ions such as chloride, proton, potassium, sodium and phosphate. At the synaptic vesicle membrane, mainly functions as an uniporter which transports preferentially L-glutamate but also phosphate from the cytoplasm into synaptic vesicles at presynaptic nerve terminals of excitatory neural cells. The L-glutamate or phosphate uniporter activity is electrogenic and is driven by the proton electrochemical gradient, mainly by the electrical gradient established by the vacuolar H(+)-ATPase across the synaptic vesicle membrane. In addition, functions as a chloride channel that allows a chloride permeation through the synaptic vesicle membrane that affects the proton electrochemical gradient and promotes synaptic vesicles acidification. Moreover, may function as a K(+)/H(+) antiport allowing to maintain the electrical gradient and to decrease chemical gradient and therefore sustain vesicular glutamate uptake. The vesicular K(+)/H(+) antiport activity is electroneutral. At the plasma membrane, following exocytosis, functions as a symporter of Na(+) and phosphate from the extracellular space to the cytoplasm allowing synaptic phosphate homeostasis regulation. The symporter activity is driven by an inside negative membrane potential and is electrogenic. Is necessary for synaptic signaling of visual-evoked responses from photoreceptors. This Xenopus laevis (African clawed frog) protein is Vesicular glutamate transporter 1.